The chain runs to 146 residues: Large ribosomal subunit protein uL15 (146 aa).

A compositionally biased stretch (basic and acidic residues) spans 1–10 (MTLKLHDLRP). The tract at residues 1–41 (MTLKLHDLRPARGSKTARTRVGRGDGSKGKTAGRGTKGTRA) is disordered.

The protein belongs to the universal ribosomal protein uL15 family. Part of the 50S ribosomal subunit.

In terms of biological role, binds to the 23S rRNA. The protein is Large ribosomal subunit protein uL15 of Mycobacterium bovis (strain BCG / Pasteur 1173P2).